We begin with the raw amino-acid sequence, 283 residues long: Non-selective voltage-gated ion channel VDAC1 (283 aa).

The residue at position 2 (Ala2) is an N-acetylalanine. Lys12 is a binding site for ATP. Residue Lys12 forms a Glycyl lysine isopeptide (Lys-Gly) (interchain with G-Cter in ubiquitin) linkage. Ser13 is subject to Phosphoserine. Thr19 is modified (phosphothreonine). Residue Lys20 participates in ATP binding. At Lys20 the chain carries N6-acetyllysine; alternate. Residue Lys20 is modified to N6-succinyllysine; alternate. Residue Lys20 forms a Glycyl lysine isopeptide (Lys-Gly) (interchain with G-Cter in ubiquitin); alternate linkage. A run of 2 beta stranded transmembrane segments spans residues 26-35 (LIKLDLKTKS) and 39-47 (LEFTSSGSA). Residues Lys53 and Lys61 each participate in a glycyl lysine isopeptide (Lys-Gly) (interchain with G-Cter in ubiquitin) cross-link. A beta stranded transmembrane segment spans residues 54-64 (VTGSLETKYRW). Tyr67 is modified (phosphotyrosine). The next 3 beta stranded transmembrane spans lie at 69–76 (LTFTEKWN), 80–89 (TLGTEITVED), and 95–104 (LKLTFDSSFS). Phosphothreonine is present on Thr107. Lys109 is subject to N6-acetyllysine; alternate. A Glycyl lysine isopeptide (Lys-Gly) (interchain with G-Cter in ubiquitin); alternate cross-link involves residue Lys109. Lys110 participates in a covalent cross-link: Glycyl lysine isopeptide (Lys-Gly) (interchain with G-Cter in ubiquitin). 4 consecutive transmembrane segments (beta stranded) span residues 111–120 (NAKIKTGYKR), 123–130 (VNLGCDVD), 137–145 (SIRGALVLG), and 150–158 (LAGYQMNFE). Lys161 participates in a covalent cross-link: Glycyl lysine isopeptide (Lys-Gly) (interchain with G-Cter in ubiquitin). The next 6 beta stranded transmembrane spans lie at 163–175 (RVTQSNFAVGYKT), 178–185 (FQLHTNVN), 189–198 (EFGGSIYQKV), 202–211 (LETAVNLAWT), 218–227 (RFGIAAKYQI), and 231–238 (ACFSAKVN). At Ser193 the chain carries Phosphoserine; by NEK1. Residue Ser240 is modified to Phosphoserine. NAD(+) is bound at residue 242–244 (LIG). Residues 242-251 (LIGLGYTQTL) form a beta stranded membrane-spanning segment. Lys252 carries the N6-acetyllysine modification. A beta stranded transmembrane segment spans residues 254–263 (GIKLTLSALL). 260-264 (SALLD) serves as a coordination point for NAD(+). Position 266 is an N6-acetyllysine; alternate (Lys266). Lys266 participates in a covalent cross-link: Glycyl lysine isopeptide (Lys-Gly) (interchain with G-Cter in ubiquitin); alternate. The beta stranded transmembrane segment at 273 to 282 (HKLGLGLEFQ) threads the bilayer. A Glycyl lysine isopeptide (Lys-Gly) (interchain with G-Cter in ubiquitin) cross-link involves residue Lys274.

This sequence belongs to the eukaryotic mitochondrial porin family. As to quaternary structure, homodimer and homotrimer; in response to cyclic AMP or calcium; oligomerization is required for scramblase activity. Component of the mitochondrial permeability transition pore complex (mPTPC), at least composed of SPG7, VDAC1 and PPIF. Interacts with SPG7, NIPSNAP2 and SLC25A30. Interacts with hexokinases including HK1. The HK1-VDAC1 complex interacts with ATF2. Interacts with BCL2L1. Interacts with BAK1. Interacts with RTL10/BOP (via BH3 domain). Interacts with amyloid-beta and APP; induces VDAC1 dephosphorylation. Interacts with TMEM41B. Interacts with BCAP31. Interacts with HSPA9; this interaction couples ITPR1 to VDAC1. Phosphorylation at Ser-193 by NEK1 promotes the closed conformational state preventing excessive mitochondrial membrane permeability and subsequent apoptotic cell death after injury. Phosphorylation by the AKT-GSK3B axis stabilizes the protein probably by preventing ubiquitin-mediated proteasomal degradation. Post-translationally, ubiquitinated. Undergoes monoubiquitination and polyubiquitination by PRKN; monoubiquitination at Lys-274 inhibits apoptosis, whereas polyubiquitination leads to its degradation and promotes mitophagy. Deubiquitinated by USP30.

The protein localises to the mitochondrion outer membrane. The protein resides in the cell membrane. It is found in the membrane raft. The catalysed reaction is chloride(in) = chloride(out). It carries out the reaction K(+)(in) = K(+)(out). It catalyses the reaction ATP(in) = ATP(out). The enzyme catalyses Ca(2+)(in) = Ca(2+)(out). The catalysed reaction is Na(+)(in) = Na(+)(out). It carries out the reaction Mg(2+)(in) = Mg(2+)(out). It catalyses the reaction L-glutamate(out) = L-glutamate(in). The enzyme catalyses dopamine(out) = dopamine(in). The catalysed reaction is acetylcholine(in) = acetylcholine(out). It carries out the reaction Fe(III)-[cytochrome c](out) = Fe(III)-[cytochrome c](in). It catalyses the reaction a 1,2-diacyl-sn-glycero-3-phosphocholine(in) = a 1,2-diacyl-sn-glycero-3-phosphocholine(out). The enzyme catalyses a 1,2-diacyl-sn-glycero-3-phospho-L-serine(in) = a 1,2-diacyl-sn-glycero-3-phospho-L-serine(out). With respect to regulation, inhibited by nitric oxide. Its function is as follows. Non-selective voltage-gated ion channel that mediates the transport of anions and cations through the mitochondrion outer membrane and plasma membrane. The channel at the outer mitochondrial membrane allows diffusion of small hydrophilic molecules; in the plasma membrane it is involved in cell volume regulation and apoptosis. It adopts an open conformation at low or zero membrane potential and a closed conformation at potentials above 30-40 mV. The open state has a weak anion selectivity whereas the closed state is cation-selective. Binds various signaling molecules, including the sphingolipid ceramide, the phospholipid phosphatidylcholine, and the sterols cholesterol and oxysterol. In depolarized mitochondria, acts downstream of PRKN and PINK1 to promote mitophagy or prevent apoptosis; polyubiquitination by PRKN promotes mitophagy, while monoubiquitination by PRKN decreases mitochondrial calcium influx which ultimately inhibits apoptosis. May participate in the formation of the permeability transition pore complex (PTPC) responsible for the release of mitochondrial products that triggers apoptosis. May mediate ATP export from cells. Part of a complex composed of HSPA9, ITPR1 and VDAC1 that regulates mitochondrial calcium-dependent apoptosis by facilitating calcium transport from the ER lumen to the mitochondria intermembrane space thus providing calcium for the downstream calcium channel MCU that directly releases it into mitochondria matrix. Mediates cytochrome c efflux. Functionally, catalyzes the scrambling of phospholipids across the outer mitochondrial membrane; the mechanism is unrelated to channel activity and is capable of translocating both anionic and zwitterionic phospholipids. This is Non-selective voltage-gated ion channel VDAC1 from Sus scrofa (Pig).